The sequence spans 448 residues: MSFTPGKQSSSRASSGNRSGNGILKWADQSDQSRNVQTRGRRAQSKQTATSQQPSGGNVVPYYSWFSGITQFQKGKEFEFAEGQGVPIAPGVPATEAKGYWYRHNRRSFKTADGNQRQLLPRWYFYYLGTGPHAKDQYGTDIDGVYWVASNQADVNTPADILDRDPSSDEAIPTRFPPGTVLPQGYYIEGSGRSAPNSRSTSRASSRASSAGSRSRANSGNRTPTSGVTPDMADQIASLVLAKLGKDAAKPQQVTKQTAKEIRQKILNKPRQKRSPNKQCTVQQCFGKRGPNQNFGGGEMLKLGTSDPQFPILAELAPTAGAFFFGSRLELAKVQNLSGNLDEPQKDVYELRYNGAIRFDSTLSGFETIMKVLNENLNAYQQQDGTMNMSPKPQRQRGQKNGQGENDNISVAAPKSRVQQNKIRELTAEDISLLKKMDEPFTEDTSEI.

The segment at 1 to 55 is disordered; that stretch reads MSFTPGKQSSSRASSGNRSGNGILKWADQSDQSRNVQTRGRRAQSKQTATSQQPS. Low complexity predominate over residues 9-22; it reads SSSRASSGNRSGNG. Composition is skewed to polar residues over residues 29–38 and 45–55; these read QSDQSRNVQT and SKQTATSQQPS. Residues 52-194 form an RNA-binding region; the sequence is QQPSGGNVVP…GYYIEGSGRS (143 aa). Residues 61-190 form the CoV N NTD domain; that stretch reads PYYSWFSGIT…VLPQGYYIEG (130 aa). 3 residues coordinate RNA: R106, R122, and R164. Disordered stretches follow at residues 158-231 and 383-420; these read PADI…VTPD and QDGTMNMSPKPQRQRGQKNGQGENDNISVAAPKSRVQQ. S167 is modified (phosphoserine; by host). The residue at position 174 (T174) is a Phosphothreonine; by host. S191 bears the Phosphoserine; by host mark. A compositionally biased stretch (low complexity) spans 193-223; the sequence is RSAPNSRSTSRASSRASSAGSRSRANSGNRT. Residues 259-384 form the CoV N CTD domain; that stretch reads AKEIRQKILN…ENLNAYQQQD (126 aa). Residues 266-384 are dimerization; sequence ILNKPRQKRS…ENLNAYQQQD (119 aa). Composition is skewed to polar residues over residues 383-393 and 399-409; these read QDGTMNMSPKP and QKNGQGENDNI. S390 is modified (phosphoserine; by host). Position 427 is a phosphothreonine; by host (T427).

The protein belongs to the betacoronavirus nucleocapsid protein family. In terms of assembly, homooligomer. Both monomeric and oligomeric forms interact with RNA. Interacts with protein M. Interacts with NSP3; this interaction serves to tether the genome to the newly translated replicase-transcriptase complex at a very early stage of infection. Post-translationally, ADP-ribosylated. The ADP-ribosylation is retained in the virion during infection. In terms of processing, phosphorylated on serine and threonine residues.

Its subcellular location is the virion. It localises to the host endoplasmic reticulum-Golgi intermediate compartment. The protein resides in the host Golgi apparatus. Functionally, packages the positive strand viral genome RNA into a helical ribonucleocapsid (RNP) and plays a fundamental role during virion assembly through its interactions with the viral genome and membrane protein M. Plays an important role in enhancing the efficiency of subgenomic viral RNA transcription as well as viral replication. The chain is Nucleoprotein from Bovine coronavirus (strain 98TXSF-110-LUN) (BCoV-LUN).